The primary structure comprises 3133 residues: Hemocytin (3133 aa).

One can recognise a TIL 1 domain in the interval 40–96 (CTGGQQYTVCADSCLRKCSDTALAASGQCKPVCVEGCACSPSQLLDDNGVCVPVAKC). Asparagine 151 is a glycosylation site (N-linked (GlcNAc...) asparagine). The 57-residue stretch at 153–209 (TAQNMEFTTCETSEPLTCKNMHLPPSTQTAECRPGCQCKKGQVLDTASKRCVPATQC) folds into the TIL 2 domain. Asparagine 237 carries N-linked (GlcNAc...) asparagine glycosylation. The region spanning 247–418 (GVCGAWGDSH…DSWKLKPTCP (172 aa)) is the VWFD 1 domain. 3 cysteine pairs are disulfide-bonded: cysteine 249–cysteine 380, cysteine 271–cysteine 417, and cysteine 295–cysteine 302. A TIL 3 domain is found at 509 to 576 (CDEVCSNYDS…TTECVPRAKC (68 aa)). The N-linked (GlcNAc...) asparagine glycan is linked to asparagine 564. Residues 661 to 680 (PDGQSVESEPLPKPNELQIG) form a disordered region. The region spanning 770–837 (CPPGEVYQAC…ERTCVPVKDC (68 aa)) is the TIL 4 domain. The disordered stretch occupies residues 899 to 924 (STTTTTTTSTTTTTTTPEPTETTTET). Cystine bridges form between cysteine 940/cysteine 1095 and cysteine 1116/cysteine 1254. F5/8 type C domains follow at residues 940-1095 (CSPD…IIGC) and 1116-1254 (CTEP…PIGC). N-linked (GlcNAc...) asparagine glycosylation is found at asparagine 1170, asparagine 1387, asparagine 1622, asparagine 1727, and asparagine 1847. The VWFD 2 domain maps to 1619–1794 (VFCNMTGRTF…KPGVPADACA (176 aa)). 2 disulfide bridges follow: cysteine 1621/cysteine 1754 and cysteine 1641/cysteine 1793. Residues 1890 to 1948 (CPPPLVHYDCYRKRCEETCAPYPNAARACPAQEGQCSPGCYCPDGKLRKGDQCVLPADC) form the TIL 5 domain. In terms of domain architecture, VWFD 3 spans 1951–2136 (CTCTGVGTPA…WQASPEKLTE (186 aa)). Disulfide bonds link cysteine 1953–cysteine 2099 and cysteine 2001–cysteine 2009. 2 N-linked (GlcNAc...) asparagine glycosylation sites follow: asparagine 1975 and asparagine 1985. Asparagine 2093, asparagine 2113, asparagine 2161, asparagine 2276, and asparagine 2451 each carry an N-linked (GlcNAc...) asparagine glycan. Positions 2229–2285 (CEEPFVYRACVDCERTCDNYEQLQTSPEKCTNKPVEGCFCPEGKVRVNNTCIEPGKC) constitute a TIL 6 domain. In terms of domain architecture, VWFC 1 spans 2553–2622 (VACRHQDNVY…DSGQCCGKCE (70 aa)). 9 N-linked (GlcNAc...) asparagine glycosylation sites follow: asparagine 2647, asparagine 2654, asparagine 2663, asparagine 2794, asparagine 2810, asparagine 2865, asparagine 2929, asparagine 2964, and asparagine 3028. The 66-residue stretch at 2842-2907 (VACRDGDKIY…AADHCCGRCV (66 aa)) folds into the VWFC 2 domain. 4 disulfides stabilise this stretch: cysteine 2971-cysteine 3040, cysteine 2991-cysteine 3054, cysteine 3004-cysteine 3070, and cysteine 3020-cysteine 3072. Residues 2971–3076 (CNEKPQALSK…PARCHCAACG (106 aa)) enclose the CTCK domain.

May be converted into the 260 kDa mature hemocytin by proteolysis.

In terms of biological role, adhesive protein and relates to hemostasis or encapsulation of foreign substances for self-defense. The polypeptide is Hemocytin (Bombyx mori (Silk moth)).